A 463-amino-acid chain; its full sequence is Perilipin-5 (463 aa).

Residues M1–Q108 form an interaction with LIPE region. The segment at M1–L173 is essential for lipid droplet targeting. A phosphoserine mark is found at S2, S148, and S322. The tract at residues V185–F463 is interaction with PNPLA2 and ABHD5. The recruits mitochondria at the lipid droplet surface stretch occupies residues Q444–F463.

Belongs to the perilipin family. As to quaternary structure, homooligomer. Interacts with PNPLA2; prevents interaction of PNPLA2 with ABHD5. Interacts with ABHD5; targets ABHD5 to lipid droplets and promotes interaction of ABHD5 with PNPLA2. Interacts with LIPE. Post-translationally, phosphorylated by PKA. Phosphorylated on serine in skeletal muscle at rest or upon lipolytic stimulation. As to expression, expressed in skeletal muscle, liver, heart and kidney.

The protein localises to the lipid droplet. The protein resides in the cytoplasm. It is found in the mitochondrion. Lipid droplet-associated protein that maintains the balance between lipogenesis and lipolysis and also regulates fatty acid oxidation in oxidative tissues. Recruits mitochondria to the surface of lipid droplets and is involved in lipid droplet homeostasis by regulating both the storage of fatty acids in the form of triglycerides and the release of fatty acids for mitochondrial fatty acid oxidation. In lipid droplet triacylglycerol hydrolysis, plays a role as a scaffolding protein for three major key lipolytic players: ABHD5, PNPLA2 and LIPE. Reduces the triacylglycerol hydrolase activity of PNPLA2 by recruiting and sequestering PNPLA2 to lipid droplets. Phosphorylation by PKA enables lipolysis probably by promoting release of ABHD5 from the perilipin scaffold and by facilitating interaction of ABHD5 with PNPLA2. Also increases lipolysis through interaction with LIPE and upon PKA-mediated phosphorylation of LIPE. In Homo sapiens (Human), this protein is Perilipin-5 (PLIN5).